A 248-amino-acid chain; its full sequence is MFKRTALILRRCFQPTFIRPHHINVLENFKEADDLPNQGQAKFVDVSIHDPQHIRSALVSPMQRKFLQDLEQQQTVRIKWFKEGNQDELENMKNECRRLALEIIMAAKGGDIKKACKELAEKEKCKQIELKKKCKELEKKTKCAKKDPCKKKDPCKKKDPCKKKDPCKKKDPCKKKDPCKKKDPCKKKDPCKKKGGDLKKKCKKLAEKEKCKKLAKKEKMKKLQKKCKKMAQKEKCKKMAKKDKCKKK.

Residues 82 to 147 (KEGNQDELEN…EKKTKCAKKD (66 aa)) are a coiled coil. Residues 146 to 200 (KDPCKKKDPCKKKDPCKKKDPCKKKDPCKKKDPCKKKDPCKKKDPCKKKGGDLKK) form a disordered region. Repeat copies occupy residues 147-152 (DPCKKK), 153-158 (DPCKKK), 159-164 (DPCKKK), 165-170 (DPCKKK), 171-176 (DPCKKK), 177-182 (DPCKKK), 183-188 (DPCKKK), and 189-194 (DPCKKK). Positions 147 to 194 (DPCKKKDPCKKKDPCKKKDPCKKKDPCKKKDPCKKKDPCKKKDPCKKK) are 8 X 6 AA tandem repeat of D-P-C-K-K-K. Residues 197-244 (DLKKKCKKLAEKEKCKKLAKKEKMKKLQKKCKKMAQKEKCKKMAKKDK) adopt a coiled-coil conformation.

Expression limited to post-meiotic male germ cells. Expressed in elongated spermatids during individualization and in finally elongated nuclei of spermatids. After completion of nuclear shaping it is no longer expressed in the sperm heads with the onset of individualization.

The protein localises to the nucleus. It localises to the mitochondrion. Functionally, may be involved in the final steps of mitochondrial differentiation within the flagellum. The protein is Sperm-specific protein Don juan (dj) of Drosophila melanogaster (Fruit fly).